The sequence spans 835 residues: Pre-mRNA-processing protein 40C (835 aa).

Residues 1–20 (MEGENTTDPPYTTAASSGQS) show a composition bias toward polar residues. Residues 1–22 (MEGENTTDPPYTTAASSGQSIF) are disordered. 2 WW domains span residues 243 to 276 (GNRLDAWTAHKSEAGVLYYYNSVTGQSTYEKPPG) and 295 to 328 (SLPGTDWALVSTNDGKKYYYNNKTKVSSWQIPAE). The interval 397 to 459 (SGMPVSSTIT…DSGPSKEECS (63 aa)) is disordered. Polar residues predominate over residues 400–428 (PVSSTITSEANSGKTTEVTPSGESGNSTG). 3 consecutive FF domains span residues 455–509 (KEEC…YVKT), 519–577 (RAAH…RVLS), and 590–643 (RAAA…YIAE). Disordered stretches follow at residues 649–677 (RGDDHEMKARDEEDKLRERERELRKRKER) and 714–738 (TESKPILERDPQKRASNPDLEPADK). FF domains follow at residues 691 to 748 (RKEA…HVKS) and 750 to 815 (YERC…YVED).

It belongs to the PRPF40 family. In terms of assembly, interacts (via the WW domains) with the phosphorylated C-terminal domain of NRPB1 (via CTD domain). In terms of tissue distribution, expressed in roots, shoots, rosette leaves, cauline leaves, stems and flowers.

The protein localises to the nucleus. Its function is as follows. Binds the phosphorylated C-terminal domain (CTD) of the largest subunit of RNA polymerase II and functions as a scaffold for RNA processing machineries. May be involved in pre-mRNA splicing. This Arabidopsis thaliana (Mouse-ear cress) protein is Pre-mRNA-processing protein 40C.